The sequence spans 195 residues: Molybdenum cofactor guanylyltransferase (195 aa).

Residues 10–12 (LAG), Lys23, Asn51, Asp69, and Asp99 contribute to the GTP site. Residue Asp99 participates in Mg(2+) binding.

This sequence belongs to the MobA family. Monomer. Mg(2+) is required as a cofactor.

It is found in the cytoplasm. It catalyses the reaction Mo-molybdopterin + GTP + H(+) = Mo-molybdopterin guanine dinucleotide + diphosphate. In terms of biological role, transfers a GMP moiety from GTP to Mo-molybdopterin (Mo-MPT) cofactor (Moco or molybdenum cofactor) to form Mo-molybdopterin guanine dinucleotide (Mo-MGD) cofactor. In Histophilus somni (strain 2336) (Haemophilus somnus), this protein is Molybdenum cofactor guanylyltransferase.